We begin with the raw amino-acid sequence, 644 residues long: Sodium/hydrogen exchanger 9 (644 aa).

The Lumenal portion of the chain corresponds to 1-20 (MAGQLRLTSGKDEDHFQHQG). Residues 21 to 41 (AVELLAFNFLLILTILTIWLF) traverse the membrane as a helical segment. The Cytoplasmic portion of the chain corresponds to 42-45 (KNHR). Residues 46 to 66 (FRFLHETGGAMVYGLIMGLIL) form a helical membrane-spanning segment. The Lumenal segment spans residues 67-126 (RYATAPTDIDSGTVYNCGKLLFSPSTLLVNITDQVYEYKYQREINQHNISPHQGNAILEK). Residues 127 to 147 (MTFDPEIFFNVLLPPIIFHAG) form a helical membrane-spanning segment. Over 148 to 164 (YSLKKRHFFQNLGSILT) the chain is Cytoplasmic. The helical transmembrane segment at 165-185 (YAFLGTAISCVVIGLIMYGFV) threads the bilayer. Residues 186–203 (KAMVHAGQLKSGDFHFTD) are Lumenal-facing. Residues 204-224 (CLFFGSLMSATDPVTVLAIFH) traverse the membrane as a helical segment. At 225–235 (ELHVDPDLYTL) the chain is on the cytoplasmic side. Residues 236–256 (LFGESVLNDAVAIVLTYSISI) form a helical membrane-spanning segment. Residues 257–277 (YSPKENPNAFDTAAFFQSVGN) are Lumenal-facing. A helical membrane pass occupies residues 278 to 298 (FLGIFAGSFAMGSAYAVVTAL). Residues 299 to 309 (LTKFTKLREFP) are Cytoplasmic-facing. The chain crosses the membrane as a helical span at residues 310–327 (MLETGLFFLLSWSAFLSA). Over 328-333 (EAAGLT) the chain is Lumenal. Residues 334–350 (GIVAVLFCGVTQAHYTY) traverse the membrane as a helical segment. The Cytoplasmic portion of the chain corresponds to 351-364 (NNLSSDSKLRTKQL). A helical transmembrane segment spans residues 365 to 385 (FEFMNFLAENVIFCYMGLALF). A topological domain (lumenal) is located at residue T386. A helical transmembrane segment spans residues 387-407 (FQNHIFNALFILGAFLAIFVA). The Cytoplasmic segment spans residues 408 to 429 (RACNIYPLSFLLNLGRKQKIPW). A helical transmembrane segment spans residues 430 to 450 (NFQHMMMFSGLRGAIAFALAI). At 451–465 (RNTESQPKQMMFTTT) the chain is on the lumenal side. Residues 466–486 (LLLVFFTVWVFGGGTTPMLTW) form a helical membrane-spanning segment. Residues 487–644 (LQIRVGVDLD…EQTRGQPQMD (158 aa)) are Cytoplasmic-facing.

The protein belongs to the monovalent cation:proton antiporter 1 (CPA1) transporter (TC 2.A.36) family. Homodimer; phosphatidylinositol-4,5-bisphosphate (PIP2) and phosphatidylinositol 3,4,5-trisphosphate (PIP3) could be involved in the dimer stabilization. Interacts (via the C-terminus) with RACK1. Interacts with CHP1. As to expression, expressed in hair bundles and in vestibular hair bundles. Expressed in brain.

The protein localises to the late endosome membrane. Its subcellular location is the early endosome membrane. The protein resides in the recycling endosome membrane. It localises to the cell membrane. It is found in the cytoplasmic vesicle. The protein localises to the phagosome membrane. The catalysed reaction is Na(+)(in) + H(+)(out) = Na(+)(out) + H(+)(in). It catalyses the reaction K(+)(in) + H(+)(out) = K(+)(out) + H(+)(in). In terms of biological role, endosomal Na(+), K(+)/H(+) antiporter. Mediates the electroneutral exchange of endosomal luminal H(+) for a cytosolic Na(+) or K(+). By facilitating proton efflux, SLC9A9 counteracts the acidity generated by vacuolar (V)-ATPase, thereby limiting luminal acidification. Regulates organellar pH and consequently, endosome maturation and endocytic trafficking of plasma membrane receptors and neurotransporters. Promotes the recycling of transferrin receptors back to the cell surface to facilitate additional iron uptake in the brain. Regulates synaptic transmission by regulating the luminal pH of axonal endosomes. Regulates phagosome lumenal pH, thus affecting phagosome maturation, and consequently, microbicidal activity in macrophages. Can also be active at the cell surface of specialized cells, e.g., in the inner ear hair bundles uses the high K(+) of the endolymph to regulate intracelular pH. The polypeptide is Sodium/hydrogen exchanger 9 (Slc9a9) (Rattus norvegicus (Rat)).